The sequence spans 994 residues: Bifunctional glutamine synthetase adenylyltransferase/adenylyl-removing enzyme (994 aa).

The tract at residues 1–487 is adenylyl removase; it reads MVVTKLATQR…LHTKLFYQPL (487 aa). The segment at 492–994 is adenylyl transferase; the sequence is GPTGLEIAHG…KAVVRKVFGS (503 aa).

This sequence belongs to the GlnE family. Mg(2+) is required as a cofactor.

It carries out the reaction [glutamine synthetase]-O(4)-(5'-adenylyl)-L-tyrosine + phosphate = [glutamine synthetase]-L-tyrosine + ADP. It catalyses the reaction [glutamine synthetase]-L-tyrosine + ATP = [glutamine synthetase]-O(4)-(5'-adenylyl)-L-tyrosine + diphosphate. Functionally, involved in the regulation of glutamine synthetase GlnA, a key enzyme in the process to assimilate ammonia. When cellular nitrogen levels are high, the C-terminal adenylyl transferase (AT) inactivates GlnA by covalent transfer of an adenylyl group from ATP to specific tyrosine residue of GlnA, thus reducing its activity. Conversely, when nitrogen levels are low, the N-terminal adenylyl removase (AR) activates GlnA by removing the adenylyl group by phosphorolysis, increasing its activity. The regulatory region of GlnE binds the signal transduction protein PII (GlnB) which indicates the nitrogen status of the cell. This is Bifunctional glutamine synthetase adenylyltransferase/adenylyl-removing enzyme from Mycobacterium tuberculosis (strain CDC 1551 / Oshkosh).